Consider the following 408-residue polypeptide: Putative ankyrin repeat protein L483 (408 aa).

ANK repeat units lie at residues 78–107 (SLNKCLIKSCKKNKLNIIKYLVSLGADIKA), 108–137 (GDDCAVQLASQNGHLEVIEYLVAQGANIRA), 139–167 (NDYAVIWASRNGYLDIVKYLVSQGADIRA), 168–197 (NNDYAVRWASRNGHLKVVKYLVSLGANIRT), 198–227 (ENDYAIKYASENGYLRIVEYLVSQGADIRA), 229–257 (NDYAVGLASSNGHFEVVEYLVSQGANIRV), 259–287 (NDYAVRLASSNGHLEVVKYLVSLRANIRA), 288–317 (RCDFAIKWSSSNGHLEVVKYLVSQGADIRS), 318–347 (QNDYAVRYASTNGHLEVVKYLVGQGADIRT), 349–377 (DDYAVRWASRGGCLEVVKYLVDQGANIRA), and 378–407 (KDDYAVKWASEKGHLEIVKFLISQGAVLTK).

This is Putative ankyrin repeat protein L483 from Acanthamoeba polyphaga (Amoeba).